The following is a 65-amino-acid chain: MPKIKTLRSASKRFKKTASGLFKRKKANLRHILTKKNTNYKRCLRKKIILSLSDYKKVLLFLPYL.

This sequence belongs to the bacterial ribosomal protein bL35 family.

This is Large ribosomal subunit protein bL35 from Buchnera aphidicola subsp. Cinara cedri (strain Cc).